The sequence spans 556 residues: Potassium-transporting ATPase potassium-binding subunit (556 aa).

A run of 12 helical transmembrane segments spans residues 3–23, 57–77, 129–149, 172–192, 247–267, 278–298, 319–339, 346–366, 371–391, 408–428, 486–506, and 516–536; these read AHGV…TPIL, AAYA…LYAL, GLTV…VALM, LGLL…QGVP, LVNL…TNTF, WALL…AWWA, LGVA…CGAV, LLPL…VVVG, GLYG…LMVG, LAVI…GLAI, FVVM…MAVP, and GWLF…LTYF.

Belongs to the KdpA family. As to quaternary structure, the system is composed of three essential subunits: KdpA, KdpB and KdpC.

It localises to the cell inner membrane. Part of the high-affinity ATP-driven potassium transport (or Kdp) system, which catalyzes the hydrolysis of ATP coupled with the electrogenic transport of potassium into the cytoplasm. This subunit binds the periplasmic potassium ions and delivers the ions to the membrane domain of KdpB through an intramembrane tunnel. This Paramagnetospirillum magneticum (strain ATCC 700264 / AMB-1) (Magnetospirillum magneticum) protein is Potassium-transporting ATPase potassium-binding subunit.